The following is a 185-amino-acid chain: Inner membrane-spanning protein YciB (185 aa).

5 helical membrane-spanning segments follow: residues 27-47, 53-73, 76-96, 118-138, and 149-169; these read IVLV…YGIV, IMAS…EIRY, WKVT…QFQF, TLNL…IYIS, and FKSF…GVYI.

This sequence belongs to the YciB family.

The protein localises to the cell inner membrane. Functionally, plays a role in cell envelope biogenesis, maintenance of cell envelope integrity and membrane homeostasis. The protein is Inner membrane-spanning protein YciB of Haemophilus influenzae (strain 86-028NP).